Here is a 313-residue protein sequence, read N- to C-terminus: Ribosomal RNA small subunit methyltransferase H (313 aa).

S-adenosyl-L-methionine-binding positions include Gly35–Tyr37, Asp53, Phe80, Asp101, and Gln108.

The protein belongs to the methyltransferase superfamily. RsmH family.

The protein localises to the cytoplasm. The enzyme catalyses cytidine(1402) in 16S rRNA + S-adenosyl-L-methionine = N(4)-methylcytidine(1402) in 16S rRNA + S-adenosyl-L-homocysteine + H(+). In terms of biological role, specifically methylates the N4 position of cytidine in position 1402 (C1402) of 16S rRNA. This Acidiphilium cryptum (strain JF-5) protein is Ribosomal RNA small subunit methyltransferase H.